The primary structure comprises 993 residues: DNA-binding protein SMUBP-2 (993 aa).

The residue at position 2 (Ala-2) is an N-acetylalanine. ATP contacts are provided by residues 214–221 (GPPGTGKT), Gln-403, Tyr-442, and Glu-571. The segment at 638-785 (TAFEYLDDIV…KRRFITVSKR (148 aa)) is SS DNA-binding. Disordered regions lie at residues 651 to 723 (YSHE…VESQ), 782 to 828 (VSKR…PDQP), and 841 to 879 (VRSA…DLPT). Polar residues-rich tracts occupy residues 653 to 662 (HENSQGSSHA) and 669 to 681 (PATS…QRQE). In terms of domain architecture, R3H spans 723–786 (QDGVDHFRAM…RRFITVSKRA (64 aa)). Residues 818–828 (PPREQRGPDQP) are compositionally biased toward basic and acidic residues. The segment covering 842 to 859 (RSAQGQPASKEQQASGQQ) has biased composition (polar residues). The Nuclear localization signal motif lies at 864–868 (KKKKK). The segment at 891–940 (VKADNTCGFAKCTAGVTTLGQFCQLCSRRYCLSHHLPEIHGCGERARAHA) adopts an AN1-type zinc-finger fold. Zn(2+)-binding residues include Cys-897, Cys-902, Cys-913, Cys-916, Cys-921, His-924, His-930, and Cys-932. The disordered stretch occupies residues 971-993 (RRLDKKLSELSNQRTSRRKERGT).

It belongs to the DNA2/NAM7 helicase family. As to quaternary structure, homooligomer. Interacts with RUVBL1. Interacts with RUVBL2. Interacts with GTF3C1. Interacts with ABT1. Interacts with ribosomes. In terms of tissue distribution, expressed in all tissues examined. Expressed in the developing and adult human brain, with highest expression in the cerebellum. Moderately expressed in fibroblasts.

It is found in the nucleus. Its subcellular location is the cytoplasm. It localises to the cell projection. The protein resides in the axon. The enzyme catalyses ATP + H2O = ADP + phosphate + H(+). In terms of biological role, 5' to 3' helicase that unwinds RNA and DNA duplexes in an ATP-dependent reaction. Specific to 5'-phosphorylated single-stranded guanine-rich sequences. May play a role in RNA metabolism, ribosome biogenesis or initiation of translation. May play a role in regulation of transcription. Interacts with tRNA-Tyr. The sequence is that of DNA-binding protein SMUBP-2 (IGHMBP2) from Homo sapiens (Human).